The primary structure comprises 380 residues: 4-hydroxy-tetrahydrodipicolinate synthase, chloroplastic (380 aa).

Residues 1-44 (MISPTNLLPARKITPVSNGGAATASPSSPSVAARPRRLPSGLQS) form a disordered region. Residues 1–54 (MISPTNLLPARKITPVSNGGAATASPSSPSVAARPRRLPSGLQSVTGRGKVSLA) constitute a chloroplast transit peptide. The segment covering 21-33 (AATASPSSPSVAA) has biased composition (low complexity). Thr123 serves as a coordination point for pyruvate. Tyr209 (proton donor/acceptor) is an active-site residue. Catalysis depends on Lys237, which acts as the Schiff-base intermediate with substrate. Position 276 (Ile276) interacts with pyruvate.

The protein belongs to the DapA family. As to quaternary structure, tetramer of modified subunits derived from two genes in different combinations.

It is found in the plastid. The protein resides in the chloroplast. It carries out the reaction L-aspartate 4-semialdehyde + pyruvate = (2S,4S)-4-hydroxy-2,3,4,5-tetrahydrodipicolinate + H2O + H(+). It participates in amino-acid biosynthesis; L-lysine biosynthesis via DAP pathway; (S)-tetrahydrodipicolinate from L-aspartate: step 3/4. Its activity is regulated as follows. Sensitive to lysine inhibition. This inhibition increase in an allosteric manner with increasing concentration of the inhibitor. Catalyzes the condensation of (S)-aspartate-beta-semialdehyde [(S)-ASA] and pyruvate to 4-hydroxy-tetrahydrodipicolinate (HTPA). In Zea mays (Maize), this protein is 4-hydroxy-tetrahydrodipicolinate synthase, chloroplastic.